The following is a 670-amino-acid chain: Zinc finger protein 233 (670 aa).

Residues 8–79 (VTFKDVAVVF…ETEIQGDGCS (72 aa)) form the KRAB domain. Residues 258 to 280 (QTSDENGKGLSVGSNLELHQQLH) form a C2H2-type 1; degenerate zinc finger. A C2H2-type 2; degenerate zinc finger spans residues 311–336 (EKCYRNGDSGEGFSQGSHLQPHQRVS). Residues 342–364 (YRCQVYARSSNQNSCLPSHELTH) form a C2H2-type 3; degenerate zinc finger. Residues 370–392 (CTCGRCGKGFHHSLDFDIHCVDS) form a C2H2-type 4; degenerate zinc finger. The C2H2-type 5; degenerate zinc-finger motif lies at 398–420 (CKCDVYDKGFSQTSQLQAHQRGH). 7 C2H2-type zinc fingers span residues 452–474 (YKCE…QRIH), 480–502 (YKCD…QRVH), 508–530 (YKCD…QRVH), 536–558 (YKCE…QQVH), 564–586 (YKCD…QRVH), 592–614 (YKCE…QRIH), and 620–642 (YKCG…QRVH).

Belongs to the krueppel C2H2-type zinc-finger protein family.

It is found in the nucleus. Functionally, may be involved in transcriptional regulation. The polypeptide is Zinc finger protein 233 (ZNF233) (Homo sapiens (Human)).